A 636-amino-acid polypeptide reads, in one-letter code: Protein SOSEKI 2 (636 aa).

Residues 9–103 (HKIEVIYLLS…YVLKALEVMD (95 aa)) are DIX-like oligomerization domain. 4 disordered regions span residues 164–188 (VHNN…SRVP), 281–304 (HGRL…TVDI), 340–393 (VEGS…TSAK), and 499–524 (LGSG…VSRP). 2 stretches are compositionally biased toward polar residues: residues 375 to 390 (SSKS…TYET) and 499 to 510 (LGSGQASESFSP).

This sequence belongs to the SOSEKI family. Homodimer. Forms long polymer filaments with other SOKs proteins polymers crucial for polar localization and biological activity.

It is found in the cell membrane. Functionally, SOSEKI proteins locally interpret global polarity cues and can influence cell division orientation to coordinate cell polarization relative to body axes. The chain is Protein SOSEKI 2 from Physcomitrium patens (Spreading-leaved earth moss).